The following is a 101-amino-acid chain: Ubiquitin-related modifier 1 (101 aa).

Residue Gly101 is modified to 1-thioglycine. Gly101 is covalently cross-linked (Glycyl lysine isopeptide (Gly-Lys) (interchain with K-? in acceptor proteins)).

Belongs to the URM1 family. C-terminal thiocarboxylation occurs in 2 steps, it is first acyl-adenylated (-COAMP) via the hesA/moeB/thiF part of UBA4, then thiocarboxylated (-COSH) via the rhodanese domain of UBA4.

The protein resides in the cytoplasm. It participates in tRNA modification; 5-methoxycarbonylmethyl-2-thiouridine-tRNA biosynthesis. In terms of biological role, acts as a sulfur carrier required for 2-thiolation of mcm(5)S(2)U at tRNA wobble positions of cytosolic tRNA(Lys), tRNA(Glu) and tRNA(Gln). Serves as sulfur donor in tRNA 2-thiolation reaction by being thiocarboxylated (-COSH) at its C-terminus by the MOCS3 homolog UBA4. The sulfur is then transferred to tRNA to form 2-thiolation of mcm(5)S(2)U. Prior mcm(5) tRNA modification by the elongator complex is required for 2-thiolation. Also acts as a ubiquitin-like protein (UBL) that is covalently conjugated via an isopeptide bond to lysine residues of target proteins such as AHP1. The thiocarboxylated form serves as substrate for conjugation and oxidative stress specifically induces the formation of UBL-protein conjugates. In Scheffersomyces stipitis (strain ATCC 58785 / CBS 6054 / NBRC 10063 / NRRL Y-11545) (Yeast), this protein is Ubiquitin-related modifier 1.